A 146-amino-acid polypeptide reads, in one-letter code: Large ribosomal subunit protein bL9 (146 aa).

The protein belongs to the bacterial ribosomal protein bL9 family.

Binds to the 23S rRNA. The polypeptide is Large ribosomal subunit protein bL9 (Deinococcus deserti (strain DSM 17065 / CIP 109153 / LMG 22923 / VCD115)).